A 354-amino-acid chain; its full sequence is Uroporphyrinogen decarboxylase (354 aa).

Substrate-binding positions include 27 to 31, D77, Y154, S209, and H327; that span reads RQAGR.

Belongs to the uroporphyrinogen decarboxylase family. Homodimer.

It is found in the cytoplasm. The catalysed reaction is uroporphyrinogen III + 4 H(+) = coproporphyrinogen III + 4 CO2. It participates in porphyrin-containing compound metabolism; protoporphyrin-IX biosynthesis; coproporphyrinogen-III from 5-aminolevulinate: step 4/4. Catalyzes the decarboxylation of four acetate groups of uroporphyrinogen-III to yield coproporphyrinogen-III. This chain is Uroporphyrinogen decarboxylase, found in Teredinibacter turnerae (strain ATCC 39867 / T7901).